Consider the following 96-residue polypeptide: Accessory cholera enterotoxin (96 aa).

Residues Gln-76 to Leu-96 form a helical membrane-spanning segment.

Its subcellular location is the secreted. The protein resides in the host cell membrane. Functionally, increases short-circuit current in rabbit ileal tissue mounted in Ussing chambers, by increasing the potential difference. Cultures of V.cholerae containing the cloned ace gene cause fluid secretion in ligated rabbit ileal loops. This is Accessory cholera enterotoxin (ace) from Vibrio cholerae serotype O1 (strain ATCC 39315 / El Tor Inaba N16961).